The chain runs to 263 residues: Acetyl-coenzyme A carboxylase carboxyl transferase subunit beta (263 aa).

Positions 1-263 constitute a CoA carboxyltransferase N-terminal domain; sequence MDCPSCKVSY…LKETPKKKKA (263 aa). 4 residues coordinate Zn(2+): Cys3, Cys6, Cys22, and Cys25. A C4-type zinc finger spans residues 3–25; that stretch reads CPSCKVSYDEEVFTDNLMVCPHC.

This sequence belongs to the AccD/PCCB family. Acetyl-CoA carboxylase is a heterohexamer composed of biotin carboxyl carrier protein (AccB), biotin carboxylase (AccC) and two subunits each of ACCase subunit alpha (AccA) and ACCase subunit beta (AccD). Zn(2+) is required as a cofactor.

Its subcellular location is the cytoplasm. It catalyses the reaction N(6)-carboxybiotinyl-L-lysyl-[protein] + acetyl-CoA = N(6)-biotinyl-L-lysyl-[protein] + malonyl-CoA. Its pathway is lipid metabolism; malonyl-CoA biosynthesis; malonyl-CoA from acetyl-CoA: step 1/1. Its function is as follows. Component of the acetyl coenzyme A carboxylase (ACC) complex. Biotin carboxylase (BC) catalyzes the carboxylation of biotin on its carrier protein (BCCP) and then the CO(2) group is transferred by the transcarboxylase to acetyl-CoA to form malonyl-CoA. The polypeptide is Acetyl-coenzyme A carboxylase carboxyl transferase subunit beta (Treponema denticola (strain ATCC 35405 / DSM 14222 / CIP 103919 / JCM 8153 / KCTC 15104)).